We begin with the raw amino-acid sequence, 626 residues long: Conserved oligomeric Golgi complex subunit 8 (626 aa).

Positions 580–598 (PAPAPALPPNAPSPEPVTP) are enriched in pro residues. The tract at residues 580–626 (PAPAPALPPNAPSPEPVTPVTPAVPDAGQEEVESAGPPQPDEPSAGI) is disordered.

It belongs to the COG8 family. As to quaternary structure, component of the conserved oligomeric Golgi complex which is composed of eight different subunits and is required for normal Golgi morphology and localization.

Its subcellular location is the golgi apparatus membrane. Functionally, required for normal Golgi function. The polypeptide is Conserved oligomeric Golgi complex subunit 8 (COG8) (Bos taurus (Bovine)).